Consider the following 578-residue polypeptide: MKDTIRQLIQQALTQLVNEGVLPEGLTPAIQVENARDKTHGDFASNIAMMLAKPAGMKPRDLAEKIIAALPADENVTKAEIAGPGFINFFQNTQALASRLDAALADAHVGVRKAGPAQRTVVDLSAPNLAKEMHVGHLRSTIIGDGVARVLEFLGDTVIRQNHVGDWGTQFGMLMAYLQENPITSDELSDLENFYRAAKQRFDESPEFADRARGLVVKLQAGDAECLALWTKFKDISLSHCQKIYELLNVKLTMADVMGESAYNDDLINVVNDLKAAGMLVESNGAQCVFLDEFKNAEGEPLPVIIVKADGGYLYATTDLAAVRYRSGKLKADRALYFVDQRQALHFQQVFAVARKAGFVTHPMEMEHMGFGTMNGADGRPFKTRDGGTVKLIDLLTEAQERAYALVKEKNPTLADDELRSIAKVVGIGAVKYADLSKHRTSDYSFNFDQMLNLEGNTAPYLLYAYTRVAGVFRKLEKEYSEVDGQIVLEAPQEHDLAAKLAQFGEVLNNVAEKGTPHTLCTYLYEVAGLFSSFYEKCPILTAETPAQMQSRLRLAALTGRTLKQGLELLGLETLERM.

The 'HIGH' region motif lies at 127 to 137 (PNLAKEMHVGH).

This sequence belongs to the class-I aminoacyl-tRNA synthetase family. Monomer.

It is found in the cytoplasm. It carries out the reaction tRNA(Arg) + L-arginine + ATP = L-arginyl-tRNA(Arg) + AMP + diphosphate. The sequence is that of Arginine--tRNA ligase from Pseudomonas fluorescens (strain Pf0-1).